The chain runs to 209 residues: Large ribosomal subunit protein uL3 (209 aa).

The protein belongs to the universal ribosomal protein uL3 family. As to quaternary structure, part of the 50S ribosomal subunit. Forms a cluster with proteins L14 and L19.

In terms of biological role, one of the primary rRNA binding proteins, it binds directly near the 3'-end of the 23S rRNA, where it nucleates assembly of the 50S subunit. The sequence is that of Large ribosomal subunit protein uL3 from Brevibacillus brevis (strain 47 / JCM 6285 / NBRC 100599).